We begin with the raw amino-acid sequence, 437 residues long: Aspartic proteinase CDR1 (437 aa).

An N-terminal signal peptide occupies residues methionine 1 to alanine 25. The propeptide at lysine 26–lysine 73 is activation peptide. Residues tyrosine 90 to lysine 430 form the Peptidase A1 domain. Asparagine 93 carries an N-linked (GlcNAc...) asparagine glycan. Residues aspartate 108 and aspartate 319 contribute to the active site.

The protein belongs to the peptidase A1 family.

It is found in the secreted. The protein localises to the extracellular space. It localises to the apoplast. In terms of biological role, involved in salicylic acid-dependent inducible resistance responses. May release an endogenous peptide elicitor required for the activation of inducible resistance mechanisms. Possesses protease activity in vitro. In Arabidopsis thaliana (Mouse-ear cress), this protein is Aspartic proteinase CDR1 (CDR1).